Consider the following 99-residue polypeptide: Acylphosphatase-1 (99 aa).

Residue Ala2 is modified to N-acetylalanine. The Acylphosphatase-like domain occupies 9-99 (SVDYEIFGKV…LDYSDFQIVK (91 aa)). Catalysis depends on residues Arg24 and Asn42.

Belongs to the acylphosphatase family. As to expression, organ-common type isozyme is found in many different tissues.

The catalysed reaction is an acyl phosphate + H2O = a carboxylate + phosphate + H(+). The protein is Acylphosphatase-1 (ACYP1) of Homo sapiens (Human).